Reading from the N-terminus, the 681-residue chain is Protein asunder (681 aa).

The interval 574–619 (PGASHLRSYTESPLSPERLEPTSSASNSSSSILKASKRRMSSSGQR) is disordered. The Nuclear localization signal (NLS) motif lies at 606–612 (LKASKRR).

It belongs to the Integrator subunit 13 family. In terms of assembly, belongs to the multiprotein complex Integrator, at least composed of IntS1, IntS2, IntS3, IntS4, omd/IntS5, IntS6, defl/IntS7, IntS8, IntS9, IntS10, IntS11, IntS12, asun/IntS13, IntS14 and IntS15. The core complex associates with protein phosphatase 2A subunits mts/PP2A and Pp2A-29B, to form the Integrator-PP2A (INTAC) complex. In terms of processing, phosphorylated.

The protein localises to the nucleus. Its subcellular location is the cytoplasm. The protein resides in the perinuclear region. Its function is as follows. Component of the integrator complex, a multiprotein complex that terminates RNA polymerase II (Pol II) transcription in the promoter-proximal region of genes. The integrator complex provides a quality checkpoint during transcription elongation by driving premature transcription termination of transcripts that are unfavorably configured for transcriptional elongation: the complex terminates transcription by (1) catalyzing dephosphorylation of the C-terminal domain (CTD) of Pol II subunit Polr2A/Rbp1 and Spt5, and (2) degrading the exiting nascent RNA transcript via endonuclease activity. The integrator complex is also involved in the 3'-end processing of the U7 snRNA, and also the spliceosomal snRNAs U1, U2, U4 and U5. The chain is Protein asunder (asun) from Drosophila virilis (Fruit fly).